We begin with the raw amino-acid sequence, 184 residues long: ATP synthase subunit b, chloroplastic (184 aa).

The helical transmembrane segment at 27–49 (LATNPINLSVVLGVLVFFGKGVL) threads the bilayer.

This sequence belongs to the ATPase B chain family. F-type ATPases have 2 components, F(1) - the catalytic core - and F(0) - the membrane proton channel. F(1) has five subunits: alpha(3), beta(3), gamma(1), delta(1), epsilon(1). F(0) has four main subunits: a(1), b(1), b'(1) and c(10-14). The alpha and beta chains form an alternating ring which encloses part of the gamma chain. F(1) is attached to F(0) by a central stalk formed by the gamma and epsilon chains, while a peripheral stalk is formed by the delta, b and b' chains.

It localises to the plastid. The protein localises to the chloroplast thylakoid membrane. Functionally, f(1)F(0) ATP synthase produces ATP from ADP in the presence of a proton or sodium gradient. F-type ATPases consist of two structural domains, F(1) containing the extramembraneous catalytic core and F(0) containing the membrane proton channel, linked together by a central stalk and a peripheral stalk. During catalysis, ATP synthesis in the catalytic domain of F(1) is coupled via a rotary mechanism of the central stalk subunits to proton translocation. In terms of biological role, component of the F(0) channel, it forms part of the peripheral stalk, linking F(1) to F(0). This chain is ATP synthase subunit b, chloroplastic, found in Phaseolus vulgaris (Kidney bean).